Here is a 248-residue protein sequence, read N- to C-terminus: Ubiquinone/menaquinone biosynthesis C-methyltransferase UbiE (248 aa).

S-adenosyl-L-methionine-binding positions include T71, D92, and 120–121 (DA).

This sequence belongs to the class I-like SAM-binding methyltransferase superfamily. MenG/UbiE family.

The catalysed reaction is a 2-demethylmenaquinol + S-adenosyl-L-methionine = a menaquinol + S-adenosyl-L-homocysteine + H(+). It catalyses the reaction a 2-methoxy-6-(all-trans-polyprenyl)benzene-1,4-diol + S-adenosyl-L-methionine = a 5-methoxy-2-methyl-3-(all-trans-polyprenyl)benzene-1,4-diol + S-adenosyl-L-homocysteine + H(+). It functions in the pathway quinol/quinone metabolism; menaquinone biosynthesis; menaquinol from 1,4-dihydroxy-2-naphthoate: step 2/2. The protein operates within cofactor biosynthesis; ubiquinone biosynthesis. In terms of biological role, methyltransferase required for the conversion of demethylmenaquinol (DMKH2) to menaquinol (MKH2) and the conversion of 2-polyprenyl-6-methoxy-1,4-benzoquinol (DDMQH2) to 2-polyprenyl-3-methyl-6-methoxy-1,4-benzoquinol (DMQH2). This is Ubiquinone/menaquinone biosynthesis C-methyltransferase UbiE from Methylococcus capsulatus (strain ATCC 33009 / NCIMB 11132 / Bath).